We begin with the raw amino-acid sequence, 1097 residues long: Chitin synthase 2 (1097 aa).

The disordered stretch occupies residues 1–46; the sequence is MAGYGHSTAGGFGSGSGSGPPGPQYMLPQYDEGDDPDADATPAGQG. Residues 1–748 are Extracellular-facing; that stretch reads MAGYGHSTAG…HVEFLYHLLQ (748 aa). Residues 8–19 show a composition bias toward gly residues; it reads TAGGFGSGSGSG. N55 carries N-linked (GlcNAc...) asparagine glycosylation. Disordered stretches follow at residues 148–217 and 259–322; these read SGHG…YPRY and SSQI…RPPQ. Residues 284–296 show a composition bias toward polar residues; that stretch reads STTYSSNTGTSAS. Positions 299–313 are enriched in basic and acidic residues; it reads DKFEHYGPIPEEGKH. Residues N416 and N424 are each glycosylated (N-linked (GlcNAc...) asparagine). The helical transmembrane segment at 749–769 threads the bilayer; the sequence is LLFTYFSLANFYLAFYFIAGG. Residues 770-786 lie on the Cytoplasmic side of the membrane; sequence LADPHVDPFNSDGHVAR. The helical transmembrane segment at 787-807 threads the bilayer; sequence IIFNILRYVCVLLICTQFILS. At 808–821 the chain is on the extracellular side; that stretch reads LGNRPQGAKRMYLA. Residues 822-842 form a helical membrane-spanning segment; the sequence is SMIIYAVIMVYTTFATIFIVV. Over 843–865 the chain is Cytoplasmic; that stretch reads RQIQPSQKSDDKPDLELGNNVFT. The helical transmembrane segment at 866 to 886 threads the bilayer; it reads NLIVSVASTLGLYFVMSFLYL. Topologically, residues 887–894 are extracellular; the sequence is DPWHMFTS. A helical transmembrane segment spans residues 895–915; it reads AIQYFVLLPSYICTLQIYAFC. Residues 916–993 are Cytoplasmic-facing; sequence NTHDVTWGTK…QDYYKSVRTY (78 aa). The chain crosses the membrane as a helical span at residues 994 to 1014; it reads MVVSWMVANATLAMAVSEAYG. Over 1015–1025 the chain is Extracellular; sequence DSEIGDNFYLR. Residues 1026–1046 form a helical membrane-spanning segment; it reads FILWAVAALALFRALGSTTFA. The Cytoplasmic segment spans residues 1047-1097; that stretch reads AINLVSALVEGRVRLRLNMKGFRWIKEKWGDADVKGKFEGLGDRARGLARR.

Belongs to the chitin synthase family.

It is found in the cell membrane. The enzyme catalyses [(1-&gt;4)-N-acetyl-beta-D-glucosaminyl](n) + UDP-N-acetyl-alpha-D-glucosamine = [(1-&gt;4)-N-acetyl-beta-D-glucosaminyl](n+1) + UDP + H(+). Functionally, polymerizes chitin, a structural polymer of the cell wall and septum, by transferring the sugar moiety of UDP-GlcNAc to the non-reducing end of the growing chitin polymer. The protein is Chitin synthase 2 (chs-2) of Neurospora crassa (strain ATCC 24698 / 74-OR23-1A / CBS 708.71 / DSM 1257 / FGSC 987).